Here is a 490-residue protein sequence, read N- to C-terminus: Betaine aldehyde dehydrogenase (490 aa).

Positions 26, 27, and 93 each coordinate K(+). 150–152 is an NAD(+) binding site; that stretch reads GAW. Residue Lys162 is the Charge relay system of the active site. NAD(+) is bound at residue 176 to 179; the sequence is KPSE. Val180 serves as a coordination point for K(+). An NAD(+)-binding site is contributed by 230–233; the sequence is GVAS. Leu246 serves as a coordination point for K(+). Glu252 (proton acceptor) is an active-site residue. Residues Gly254, Cys286, and Glu387 each contribute to the NAD(+) site. Cys286 (nucleophile) is an active-site residue. Cys286 carries the cysteine sulfenic acid (-SOH) modification. Positions 457 and 460 each coordinate K(+). Glu464 (charge relay system) is an active-site residue.

Belongs to the aldehyde dehydrogenase family. As to quaternary structure, dimer of dimers. K(+) is required as a cofactor.

The enzyme catalyses betaine aldehyde + NAD(+) + H2O = glycine betaine + NADH + 2 H(+). It participates in amine and polyamine biosynthesis; betaine biosynthesis via choline pathway; betaine from betaine aldehyde: step 1/1. Its function is as follows. Involved in the biosynthesis of the osmoprotectant glycine betaine. Catalyzes the irreversible oxidation of betaine aldehyde to the corresponding acid. In Escherichia coli (strain SE11), this protein is Betaine aldehyde dehydrogenase.